A 79-amino-acid chain; its full sequence is Exodeoxyribonuclease 7 small subunit (79 aa).

This sequence belongs to the XseB family. In terms of assembly, heterooligomer composed of large and small subunits.

It localises to the cytoplasm. It carries out the reaction Exonucleolytic cleavage in either 5'- to 3'- or 3'- to 5'-direction to yield nucleoside 5'-phosphates.. In terms of biological role, bidirectionally degrades single-stranded DNA into large acid-insoluble oligonucleotides, which are then degraded further into small acid-soluble oligonucleotides. This Lactococcus lactis subsp. cremoris (strain SK11) protein is Exodeoxyribonuclease 7 small subunit.